The chain runs to 141 residues: Nuclear transcription factor Y subunit B-1 (141 aa).

Positions 1 to 23 (MADTPSSPAGDGGESGGSVREQD) are disordered. At Ala2 the chain carries N-acetylalanine. The DNA-binding element occupies 26 to 32 (LPIANIS). The segment at 53–64 (VQECVSEFISFI) is subunit association domain (SAD). A disordered region spans residues 114–141 (DNKGSGKSGDGSNRDAGGGVSGEEMPSW).

This sequence belongs to the NFYB/HAP3 subunit family. As to quaternary structure, heterotrimeric transcription factor composed of three components, NF-YA, NF-YB and NF-YC. NF-YB and NF-YC must interact and dimerize for NF-YA association and DNA binding. Binds directly with DPB3-1. Ubiquitous. Predominantly expressed in leaves, flowers and siliques.

It localises to the nucleus. In terms of biological role, component of the NF-Y/HAP transcription factor complex. The NF-Y complex stimulates the transcription of various genes by recognizing and binding to a CCAAT motif in promoters. The chain is Nuclear transcription factor Y subunit B-1 from Arabidopsis thaliana (Mouse-ear cress).